A 445-amino-acid chain; its full sequence is Glutamate--tRNA ligase 1 (445 aa).

Residues 10 to 20 (PSPTGMLHVGN) carry the 'HIGH' region motif. The 'KMSKS' region motif lies at 240–244 (KISKR). Residue Lys243 participates in ATP binding.

The protein belongs to the class-I aminoacyl-tRNA synthetase family. Glutamate--tRNA ligase type 1 subfamily. In terms of assembly, monomer.

It is found in the cytoplasm. It carries out the reaction tRNA(Glu) + L-glutamate + ATP = L-glutamyl-tRNA(Glu) + AMP + diphosphate. Functionally, catalyzes the attachment of glutamate to tRNA(Glu) in a two-step reaction: glutamate is first activated by ATP to form Glu-AMP and then transferred to the acceptor end of tRNA(Glu). This is Glutamate--tRNA ligase 1 from Rickettsia bellii (strain OSU 85-389).